Consider the following 228-residue polypeptide: Octanoyltransferase (228 aa).

The BPL/LPL catalytic domain maps to 37-217 (AGGPDTLLLL…AVCDALDGRL (181 aa)). Residues 75–82 (RGGKITWH), 147–149 (AIG), and 160–162 (GFA) each bind substrate. Cys178 functions as the Acyl-thioester intermediate in the catalytic mechanism.

This sequence belongs to the LipB family.

It is found in the cytoplasm. The enzyme catalyses octanoyl-[ACP] + L-lysyl-[protein] = N(6)-octanoyl-L-lysyl-[protein] + holo-[ACP] + H(+). It participates in protein modification; protein lipoylation via endogenous pathway; protein N(6)-(lipoyl)lysine from octanoyl-[acyl-carrier-protein]: step 1/2. Its function is as follows. Catalyzes the transfer of endogenously produced octanoic acid from octanoyl-acyl-carrier-protein onto the lipoyl domains of lipoate-dependent enzymes. Lipoyl-ACP can also act as a substrate although octanoyl-ACP is likely to be the physiological substrate. The sequence is that of Octanoyltransferase from Mycolicibacterium smegmatis (strain ATCC 700084 / mc(2)155) (Mycobacterium smegmatis).